We begin with the raw amino-acid sequence, 215 residues long: Transcription elongation factor A protein-like 4 (215 aa).

Position 1 is an N-acetylmethionine (Met1). A disordered region spans residues 1–133; it reads MEKLYSENEG…RKAKRKTNKG (133 aa). 3 positions are modified to phosphoserine: Ser6, Ser88, and Ser102. Positions 25–102 are enriched in basic and acidic residues; sequence QDERKPEVTC…KPEIEGKPES (78 aa).

This sequence belongs to the TFS-II family. TFA subfamily.

The protein localises to the nucleus. Its function is as follows. May be involved in transcriptional regulation. The polypeptide is Transcription elongation factor A protein-like 4 (TCEAL4) (Homo sapiens (Human)).